We begin with the raw amino-acid sequence, 466 residues long: Adenosylhomocysteinase (466 aa).

The substrate site is built by threonine 57, aspartate 132, and glutamate 192. Threonine 193 to threonine 195 contributes to the NAD(+) binding site. Residues lysine 222 and aspartate 226 each coordinate substrate. Residues asparagine 227, glycine 256–glycine 261, glutamate 279, asparagine 314, isoleucine 335–histidine 337, and asparagine 380 contribute to the NAD(+) site.

Belongs to the adenosylhomocysteinase family. Requires NAD(+) as cofactor.

The protein localises to the cytoplasm. It carries out the reaction S-adenosyl-L-homocysteine + H2O = L-homocysteine + adenosine. It participates in amino-acid biosynthesis; L-homocysteine biosynthesis; L-homocysteine from S-adenosyl-L-homocysteine: step 1/1. Functionally, may play a key role in the regulation of the intracellular concentration of adenosylhomocysteine. The sequence is that of Adenosylhomocysteinase from Mesorhizobium japonicum (strain LMG 29417 / CECT 9101 / MAFF 303099) (Mesorhizobium loti (strain MAFF 303099)).